Reading from the N-terminus, the 232-residue chain is 7-cyano-7-deazaguanine synthase (232 aa).

ATP is bound at residue Phe8–Leu18. Residues Cys189, Cys198, Cys201, and Cys204 each contribute to the Zn(2+) site.

This sequence belongs to the QueC family. Zn(2+) is required as a cofactor.

It catalyses the reaction 7-carboxy-7-deazaguanine + NH4(+) + ATP = 7-cyano-7-deazaguanine + ADP + phosphate + H2O + H(+). It participates in purine metabolism; 7-cyano-7-deazaguanine biosynthesis. In terms of biological role, catalyzes the ATP-dependent conversion of 7-carboxy-7-deazaguanine (CDG) to 7-cyano-7-deazaguanine (preQ(0)). This chain is 7-cyano-7-deazaguanine synthase, found in Yersinia pseudotuberculosis serotype O:1b (strain IP 31758).